The primary structure comprises 400 residues: Imidazolonepropionase (400 aa).

Fe(3+) is bound by residues histidine 70 and histidine 72. Residues histidine 70 and histidine 72 each coordinate Zn(2+). 4-imidazolone-5-propanoate-binding residues include arginine 79, tyrosine 142, and histidine 175. Tyrosine 142 provides a ligand contact to N-formimidoyl-L-glutamate. Histidine 239 provides a ligand contact to Fe(3+). Histidine 239 provides a ligand contact to Zn(2+). Glutamine 242 is a binding site for 4-imidazolone-5-propanoate. Aspartate 314 contributes to the Fe(3+) binding site. Aspartate 314 contacts Zn(2+). Positions 316 and 318 each coordinate N-formimidoyl-L-glutamate. Threonine 319 contributes to the 4-imidazolone-5-propanoate binding site.

It belongs to the metallo-dependent hydrolases superfamily. HutI family. Zn(2+) serves as cofactor. Fe(3+) is required as a cofactor.

It is found in the cytoplasm. It carries out the reaction 4-imidazolone-5-propanoate + H2O = N-formimidoyl-L-glutamate. Its pathway is amino-acid degradation; L-histidine degradation into L-glutamate; N-formimidoyl-L-glutamate from L-histidine: step 3/3. In terms of biological role, catalyzes the hydrolytic cleavage of the carbon-nitrogen bond in imidazolone-5-propanoate to yield N-formimidoyl-L-glutamate. It is the third step in the universal histidine degradation pathway. This Methylobacterium nodulans (strain LMG 21967 / CNCM I-2342 / ORS 2060) protein is Imidazolonepropionase.